A 135-amino-acid chain; its full sequence is Protein PsiE homolog (135 aa).

The next 4 membrane-spanning stretches (helical) occupy residues 20–40 (VGLI…TFHL), 54–74 (YMLI…ALIV), 82–102 (HFPL…LIIV), and 107–127 (PIDT…LYLA).

Belongs to the PsiE family.

The protein localises to the cell inner membrane. This chain is Protein PsiE homolog, found in Yersinia enterocolitica serotype O:8 / biotype 1B (strain NCTC 13174 / 8081).